A 412-amino-acid chain; its full sequence is Tyrosine--tRNA ligase (412 aa).

The short motif at 56-65 is the 'HIGH' region element; it reads PSAPDVHIGH. Positions 240 to 244 match the 'KMSKS' region motif; that stretch reads KMSKS. Lys-243 contributes to the ATP binding site. The region spanning 351-412 is the S4 RNA-binding domain; it reads VWIVDLLVTL…GKRKFKKLVR (62 aa).

The protein belongs to the class-I aminoacyl-tRNA synthetase family. TyrS type 2 subfamily. Homodimer.

Its subcellular location is the cytoplasm. The catalysed reaction is tRNA(Tyr) + L-tyrosine + ATP = L-tyrosyl-tRNA(Tyr) + AMP + diphosphate + H(+). Functionally, catalyzes the attachment of tyrosine to tRNA(Tyr) in a two-step reaction: tyrosine is first activated by ATP to form Tyr-AMP and then transferred to the acceptor end of tRNA(Tyr). The polypeptide is Tyrosine--tRNA ligase (Halalkalibacterium halodurans (strain ATCC BAA-125 / DSM 18197 / FERM 7344 / JCM 9153 / C-125) (Bacillus halodurans)).